The sequence spans 367 residues: Cis-3-hydroxy-L-proline dehydratase (367 aa).

Catalysis depends on lysine 165, which acts as the Proton donor/acceptor. Positions 193, 218, and 241 each coordinate Mg(2+). Lysine 265 (proton donor/acceptor) is an active-site residue.

Belongs to the mandelate racemase/muconate lactonizing enzyme family. Requires Mg(2+) as cofactor.

The enzyme catalyses cis-3-hydroxy-L-proline = 1-pyrroline-2-carboxylate + H2O. In terms of biological role, catalyzes the dehydration of cis-3-hydroxy-L-proline (c3LHyp) to Delta(1)-pyrroline-2-carboxylate (Pyr2C). Is likely involved in a degradation pathway that converts c3LHyp to L-proline, which allows L.aggregata to grow on c3LHyp as a sole carbon source. Also catalyzes the epimerization of c3LHyp to trans-3-hydroxy-D-proline (t3DHyp), a competing reaction occurring from the same enolate anion intermediate. L-proline, t3LHyp, t4LHyp, c4DHyp and their methylated derivatives are not substrates. The sequence is that of Cis-3-hydroxy-L-proline dehydratase from Roseibium aggregatum (strain ATCC 25650 / DSM 13394 / JCM 20685 / NBRC 16684 / NCIMB 2208 / IAM 12614 / B1) (Stappia aggregata).